A 206-amino-acid polypeptide reads, in one-letter code: MARYIGPKCKLSRREGTDLFLKSGVRSIESKCKIDQLPGQHGAGRKRVTEYGLQLREKQKVRRIYGVLEKKFRLYYKEADRRKGSTGVNLLQLLESRLDNVVYRMGFASTRAEARQLVSHKSIQVNGQSVNIPSYEVSAGDVISIREKSRNQSRIAAALELSAQAGNVGWVEVDSSKFEGVFKTVPDRSDLSADISENLIVELYSK.

In terms of domain architecture, S4 RNA-binding spans 96–156; that stretch reads SRLDNVVYRM…EKSRNQSRIA (61 aa).

Belongs to the universal ribosomal protein uS4 family. Part of the 30S ribosomal subunit. Contacts protein S5. The interaction surface between S4 and S5 is involved in control of translational fidelity.

One of the primary rRNA binding proteins, it binds directly to 16S rRNA where it nucleates assembly of the body of the 30S subunit. Its function is as follows. With S5 and S12 plays an important role in translational accuracy. The sequence is that of Small ribosomal subunit protein uS4 from Hydrogenovibrio crunogenus (strain DSM 25203 / XCL-2) (Thiomicrospira crunogena).